A 209-amino-acid polypeptide reads, in one-letter code: Transcription antitermination protein NusB (209 aa).

It belongs to the NusB family.

Functionally, involved in transcription antitermination. Required for transcription of ribosomal RNA (rRNA) genes. Binds specifically to the boxA antiterminator sequence of the ribosomal RNA (rrn) operons. The protein is Transcription antitermination protein NusB of Crocosphaera subtropica (strain ATCC 51142 / BH68) (Cyanothece sp. (strain ATCC 51142)).